The following is a 553-amino-acid chain: Hyaluronan synthase 3 (553 aa).

Over 1 to 15 the chain is Cytoplasmic; the sequence is MPVQLTTALRVVGTS. A helical transmembrane segment spans residues 16 to 36; it reads LFALAVLGGILAAYVTGYQFI. At 37 to 44 the chain is on the extracellular side; it reads HTEKHYLS. The helical transmembrane segment at 45-65 threads the bilayer; it reads FGLYGAILGLHLLIQSLFAFL. Topologically, residues 66-377 are cytoplasmic; it reads EHRRMRRAGQ…NSLWFHKHHL (312 aa). The chain crosses the membrane as a helical span at residues 378–398; it reads WMTYESVVTGFFPFFLIATVI. At 399–408 the chain is on the extracellular side; the sequence is QLFYRGRIWN. The helical transmembrane segment at 409–429 threads the bilayer; sequence ILLFLLTVQLVGIIKATYACF. Residues 430 to 440 are Cytoplasmic-facing; sequence LRGNAEMIFMS. The helical transmembrane segment at 441 to 461 threads the bilayer; sequence LYSLLYMSSLLPAKIFAIATI. N-linked (GlcNAc...) asparagine glycosylation occurs at Asn462. Residues 462-473 are Extracellular-facing; the sequence is NKSGWGTSGRKT. Residues 474 to 494 traverse the membrane as a helical segment; that stretch reads IVVNFIGLIPVSIWVAVLLGG. The Cytoplasmic portion of the chain corresponds to 495–515; sequence LAYTAYCQDLFSETELAFLVS. A helical transmembrane segment spans residues 516-536; it reads GAILYGCYWVALLMLYLAIIA. Residues 537 to 553 lie on the Extracellular side of the membrane; sequence RRCGKKPEQYSLAFAEV.

The protein belongs to the NodC/HAS family. As to quaternary structure, homodimers. Forms heterodimers with HAS2 and HAS1. It depends on Mg(2+) as a cofactor. O-GlcNAcylation increases the hyaluronan synthase activity, HAS3 stability and its plasma membrane residence. The concentration of UDP-GlcNAc controls the level of O-GlcNAc modification.

It is found in the cell membrane. The protein resides in the golgi apparatus membrane. Its subcellular location is the golgi apparatus. The protein localises to the trans-Golgi network membrane. It localises to the early endosome. It carries out the reaction [hyaluronan](n) + UDP-N-acetyl-alpha-D-glucosamine = N-acetyl-beta-D-glucosaminyl-(1-&gt;4)-[hyaluronan](n) + UDP + H(+). The enzyme catalyses N-acetyl-beta-D-glucosaminyl-(1-&gt;4)-[hyaluronan](n) + UDP-alpha-D-glucuronate = [hyaluronan](n+1) + UDP + H(+). Its pathway is glycan biosynthesis; hyaluronan biosynthesis. The enzymatic activity depends on the availability of cytosolic levels of UDP-GlcUA and UDP-GlcNAc. Functionally, catalyzes the addition of GlcNAc or GlcUA monosaccharides to the nascent hyaluronan polymer. Therefore, it is essential to hyaluronan synthesis a major component of most extracellular matrices that has a structural role in tissues architectures and regulates cell adhesion, migration and differentiation. This is one of three isoenzymes responsible for cellular hyaluronan synthesis. This Homo sapiens (Human) protein is Hyaluronan synthase 3.